The sequence spans 60 residues: Acrosin (60 aa).

Residue asparagine 3 is glycosylated (N-linked (GlcNAc...) asparagine). The region spanning isoleucine 24–leucine 60 is the Peptidase S1 domain.

It belongs to the peptidase S1 family. As to quaternary structure, heavy chain (catalytic) and a light chain linked by two disulfide bonds. Forms a heterodimer with SERPINA5.

The catalysed reaction is Preferential cleavage: Arg-|-Xaa, Lys-|-Xaa.. With respect to regulation, inhibited by SERPINA5. Functionally, acrosin is the major protease of mammalian spermatozoa. It is a serine protease of trypsin-like cleavage specificity, it is synthesized in a zymogen form, proacrosin and stored in the acrosome. This chain is Acrosin (ACR), found in Capra hircus (Goat).